We begin with the raw amino-acid sequence, 176 residues long: NAD(P)H-quinone oxidoreductase subunit 6, chloroplastic (176 aa).

The next 5 helical transmembrane spans lie at 10–30 (ILLVFLGSGLILGGLGVVLFT), 32–52 (PIYSAFSLGLVFVCISLFYIP), 61–81 (AQLLIYVGAVNVLIVFAVMFM), 90–112 (FHLWTVGDGITSLVCTSILFSLI), and 152–172 (FYLPFELTSIILLVALIGAIA).

This sequence belongs to the complex I subunit 6 family. In terms of assembly, NDH is composed of at least 16 different subunits, 5 of which are encoded in the nucleus.

The protein resides in the plastid. Its subcellular location is the chloroplast thylakoid membrane. The catalysed reaction is a plastoquinone + NADH + (n+1) H(+)(in) = a plastoquinol + NAD(+) + n H(+)(out). The enzyme catalyses a plastoquinone + NADPH + (n+1) H(+)(in) = a plastoquinol + NADP(+) + n H(+)(out). In terms of biological role, NDH shuttles electrons from NAD(P)H:plastoquinone, via FMN and iron-sulfur (Fe-S) centers, to quinones in the photosynthetic chain and possibly in a chloroplast respiratory chain. The immediate electron acceptor for the enzyme in this species is believed to be plastoquinone. Couples the redox reaction to proton translocation, and thus conserves the redox energy in a proton gradient. In Ceratophyllum demersum (Rigid hornwort), this protein is NAD(P)H-quinone oxidoreductase subunit 6, chloroplastic (ndhG).